The primary structure comprises 328 residues: Oligopeptide transport ATP-binding protein AppD (328 aa).

An ABC transporter domain is found at 5–256 (LEVNNLKTYF…PLHPYTEGLL (252 aa)). 41-48 (GESGSGKS) contributes to the ATP binding site.

Belongs to the ABC transporter superfamily.

Its subcellular location is the cell membrane. This protein is a component of an oligopeptide permease, a binding protein-dependent transport system. This APP system can completely substitute for the OPP system in both sporulation and genetic competence, though, unlike OPP, is incapable of transporting tripeptides. Probably responsible for energy coupling to the transport system. This chain is Oligopeptide transport ATP-binding protein AppD (appD), found in Bacillus subtilis (strain 168).